The sequence spans 219 residues: Glutathione S-transferase F13 (219 aa).

Residues 2 to 82 (AMKLYGDEMS…YIAEKHRDKG (81 aa)) form the GST N-terminal domain. Glutathione contacts are provided by residues 11–12 (SA), 40–41 (HK), 53–54 (KV), and 66–67 (ES). A GST C-terminal domain is found at 90–217 (DPKEAAIVKL…VSPGLTVAPT (128 aa)).

Belongs to the GST superfamily. Phi family.

The protein resides in the cytoplasm. It is found in the cytosol. It carries out the reaction RX + glutathione = an S-substituted glutathione + a halide anion + H(+). Its function is as follows. May be involved in the conjugation of reduced glutathione to a wide number of exogenous and endogenous hydrophobic electrophiles and have a detoxification role against certain herbicides. This Arabidopsis thaliana (Mouse-ear cress) protein is Glutathione S-transferase F13 (GSTF13).